The following is a 92-amino-acid chain: Small ribosomal subunit protein uS19c (92 aa).

It belongs to the universal ribosomal protein uS19 family.

It is found in the plastid. The protein localises to the chloroplast. Protein S19 forms a complex with S13 that binds strongly to the 16S ribosomal RNA. This Eucalyptus globulus subsp. globulus (Tasmanian blue gum) protein is Small ribosomal subunit protein uS19c.